Here is a 492-residue protein sequence, read N- to C-terminus: Glutamyl-tRNA(Gln) amidotransferase subunit A (492 aa).

Active-site charge relay system residues include Lys78 and Ser158. The Acyl-ester intermediate role is filled by Ser182.

This sequence belongs to the amidase family. GatA subfamily. As to quaternary structure, heterotrimer of A, B and C subunits.

It carries out the reaction L-glutamyl-tRNA(Gln) + L-glutamine + ATP + H2O = L-glutaminyl-tRNA(Gln) + L-glutamate + ADP + phosphate + H(+). Allows the formation of correctly charged Gln-tRNA(Gln) through the transamidation of misacylated Glu-tRNA(Gln) in organisms which lack glutaminyl-tRNA synthetase. The reaction takes place in the presence of glutamine and ATP through an activated gamma-phospho-Glu-tRNA(Gln). This is Glutamyl-tRNA(Gln) amidotransferase subunit A from Rhodopseudomonas palustris (strain BisB5).